The following is a 286-amino-acid chain: Beta-lactamase SHV-8 (286 aa).

Residues 1–21 (MRYIRLCIISLLATLPLAVHA) form the signal peptide. Ser66 (acyl-ester intermediate) is an active-site residue. Cys73 and Cys119 are joined by a disulfide. The Proton acceptor role is filled by Glu164. 230–232 (KTG) lines the substrate pocket.

The protein belongs to the class-A beta-lactamase family.

The catalysed reaction is a beta-lactam + H2O = a substituted beta-amino acid. In terms of biological role, SHV enzymes hydrolyze broad spectrum cephalosporins notably cefotaxime and ceftazidime. The polypeptide is Beta-lactamase SHV-8 (bla) (Escherichia coli).